The following is a 360-amino-acid chain: Magnesium-protoporphyrin IX monomethyl ester [oxidative] cyclase (360 aa).

The tract at residues 1–20 (MVPPTAIAEASRSGGEPAIK) is disordered.

This sequence belongs to the AcsF family. Fe cation serves as cofactor.

It carries out the reaction Mg-protoporphyrin IX 13-monomethyl ester + 3 NADPH + 3 O2 + 2 H(+) = 3,8-divinyl protochlorophyllide a + 3 NADP(+) + 5 H2O. It functions in the pathway porphyrin-containing compound metabolism; chlorophyll biosynthesis (light-independent). Catalyzes the formation of the isocyclic ring in chlorophyll biosynthesis. Mediates the cyclase reaction, which results in the formation of divinylprotochlorophyllide (Pchlide) characteristic of all chlorophylls from magnesium-protoporphyrin IX 13-monomethyl ester (MgPMME). The polypeptide is Magnesium-protoporphyrin IX monomethyl ester [oxidative] cyclase (Synechococcus sp. (strain RCC307)).